A 290-amino-acid polypeptide reads, in one-letter code: Phosphate import ATP-binding protein PstB (290 aa).

Residues 25–285 (LEARNLDFYY…PKTRRARDYL (261 aa)) form the ABC transporter domain. An ATP-binding site is contributed by 57–64 (GPSGCGKS).

This sequence belongs to the ABC transporter superfamily. Phosphate importer (TC 3.A.1.7) family. In terms of assembly, the complex is composed of two ATP-binding proteins (PstB), two transmembrane proteins (PstC and PstA) and a solute-binding protein (PstS).

It localises to the cell inner membrane. The enzyme catalyses phosphate(out) + ATP + H2O = ADP + 2 phosphate(in) + H(+). In terms of biological role, part of the ABC transporter complex PstSACB involved in phosphate import. Responsible for energy coupling to the transport system. The chain is Phosphate import ATP-binding protein PstB from Zymomonas mobilis subsp. mobilis (strain ATCC 31821 / ZM4 / CP4).